The following is a 298-amino-acid chain: Acetylglutamate kinase (298 aa).

Residues 64–65 (GG), R86, and N195 each bind substrate.

It belongs to the acetylglutamate kinase family. ArgB subfamily.

It localises to the cytoplasm. It carries out the reaction N-acetyl-L-glutamate + ATP = N-acetyl-L-glutamyl 5-phosphate + ADP. It functions in the pathway amino-acid biosynthesis; L-arginine biosynthesis; N(2)-acetyl-L-ornithine from L-glutamate: step 2/4. In terms of biological role, catalyzes the ATP-dependent phosphorylation of N-acetyl-L-glutamate. In Aquifex aeolicus (strain VF5), this protein is Acetylglutamate kinase.